The chain runs to 203 residues: UPF0301 protein Sde_3637 (203 aa).

The protein belongs to the UPF0301 (AlgH) family.

The chain is UPF0301 protein Sde_3637 from Saccharophagus degradans (strain 2-40 / ATCC 43961 / DSM 17024).